Reading from the N-terminus, the 321-residue chain is Quinol oxidase subunit 2 (321 aa).

Residues 1–25 (MIFLFRALKPLLVLALLTVVFVLGG) form the signal peptide. The N-palmitoyl cysteine moiety is linked to residue Cys-26. Cys-26 carries the S-diacylglycerol cysteine lipid modification. Helical transmembrane passes span 49-69 (SIGF…IILV) and 90-110 (TFLE…LSVP). Residues 294–321 (QAVSPHSKTDPFENVKENEFKKSDDTEE) are disordered. Residues 300 to 321 (SKTDPFENVKENEFKKSDDTEE) are compositionally biased toward basic and acidic residues.

Belongs to the cytochrome c oxidase subunit 2 family.

Its subcellular location is the cell membrane. It carries out the reaction 2 a quinol + O2 = 2 a quinone + 2 H2O. Its function is as follows. Catalyzes quinol oxidation with the concomitant reduction of oxygen to water. Major component for energy conversion during vegetative growth. Subunit II transfers the electrons from a quinol to the binuclear center of the catalytic subunit I. The protein is Quinol oxidase subunit 2 (qoxA) of Bacillus spizizenii (strain ATCC 23059 / NRRL B-14472 / W23) (Bacillus subtilis subsp. spizizenii).